Here is a 70-residue protein sequence, read N- to C-terminus: UPF0519 protein D (70 aa).

The protein belongs to the UPF0519 family.

This chain is UPF0519 protein D, found in Dictyostelium discoideum (Social amoeba).